The chain runs to 393 residues: Cysteine protease ATG4B (393 aa).

N-acetylmethionine is present on M1. At S34 the chain carries Phosphoserine; by PKB/AKT1 and PKB/AKT2. The active-site Nucleophile is the C74. C189 carries the post-translational modification S-nitrosocysteine. Active-site residues include D278 and H280. S-nitrosocysteine occurs at positions 292 and 301. C292 and C361 are joined by a disulfide. At S316 the chain carries Phosphoserine; by ULK1. Position 383 is a phosphoserine; by STK26 (S383). Residues F388–L391 carry the LIR motif. The residue at position 392 (S392) is a Phosphoserine.

Belongs to the peptidase C54 family. In terms of assembly, interacts with PFKP; promoting phosphorylation of ATG4B at Ser-34. Interacts with GBP7. Post-translationally, phosphorylation at Ser-383 and Ser-392 promotes autophagy by increasing protein delipidation activity without affecting proteolytic activation of ATG8 proteins. Phosphorylation at Ser-316 by ULK1 inhibits autophagy by decreasing both proteolytic activation and delipidation activities. Phosphorylation at Ser-316 is dephosphorylated by protein phosphatase 2A (PP2A). Phosphorylation at Ser-34 by AKT2 promotes its hydrolase activity, leading to increased proteolytic activation and delipidation of ATG8 family proteins. Phosphorylation at Ser-34 by AKT1 promotes mitochondrial localization and inhibition of the F1F0-ATP synthase activity, leading to elevation of mitochondrial reactive oxygen species (ROS). Ubiquitinated by RNF5, leading to its degradation by the proteasome. In terms of processing, S-nitrosylation at Cys-189 and Cys-292 in response to high glucose decreases both proteolytic activation and delipidation activities. Post-translationally, O-glycosylated by OGT, leading to increase protease activity, thereby promoting the proteolytic activation of ATG8 family proteins. Forms reversible intrachain disulfide bonds in response to oxidative stress. Forms interchain disulfide bonds, leading to formation of homooligomers in response to oxidation.

It localises to the cytoplasm. Its subcellular location is the cytosol. It is found in the cytoplasmic vesicle. The protein localises to the autophagosome. The protein resides in the endoplasmic reticulum. It localises to the mitochondrion. The enzyme catalyses [protein]-C-terminal L-amino acid-glycyl-phosphatidylethanolamide + H2O = [protein]-C-terminal L-amino acid-glycine + a 1,2-diacyl-sn-glycero-3-phosphoethanolamine. The catalysed reaction is [protein]-C-terminal L-amino acid-glycyl-phosphatidylserine + H2O = [protein]-C-terminal L-amino acid-glycine + a 1,2-diacyl-sn-glycero-3-phospho-L-serine. Inhibited by N-ethylmaleimide. Redox-regulated during autophagy since reducing conditions activate ATG4A whereas an oxidizing environment such as the presence of H(2)O(2) inhibits its activity. The cysteine protease activity compounds is inhibited by styrylquinoline compounds 4-28 and LV-320. In terms of biological role, cysteine protease that plays a key role in autophagy by mediating both proteolytic activation and delipidation of ATG8 family proteins. Required for canonical autophagy (macroautophagy), non-canonical autophagy as well as for mitophagy. The protease activity is required for proteolytic activation of ATG8 family proteins: cleaves the C-terminal amino acid of ATG8 proteins MAP1LC3A, MAP1LC3B, MAP1LC3C, GABARAPL1, GABARAPL2 and GABARAP, to reveal a C-terminal glycine. Exposure of the glycine at the C-terminus is essential for ATG8 proteins conjugation to phosphatidylethanolamine (PE) and insertion to membranes, which is necessary for autophagy. Protease activity is also required to counteract formation of high-molecular weight conjugates of ATG8 proteins (ATG8ylation): acts as a deubiquitinating-like enzyme that removes ATG8 conjugated to other proteins, such as ATG3. In addition to the protease activity, also mediates delipidation of ATG8 family proteins. Catalyzes delipidation of PE-conjugated forms of ATG8 proteins during macroautophagy. Also involved in non-canonical autophagy, a parallel pathway involving conjugation of ATG8 proteins to single membranes at endolysosomal compartments, by catalyzing delipidation of ATG8 proteins conjugated to phosphatidylserine (PS). Compared to other members of the family (ATG4A, ATG4C or ATG4C), constitutes the major protein for proteolytic activation of ATG8 proteins, while it displays weaker delipidation activity than other ATG4 paralogs. Involved in phagophore growth during mitophagy independently of its protease activity and of ATG8 proteins: acts by regulating ATG9A trafficking to mitochondria and promoting phagophore-endoplasmic reticulum contacts during the lipid transfer phase of mitophagy. The polypeptide is Cysteine protease ATG4B (Homo sapiens (Human)).